We begin with the raw amino-acid sequence, 481 residues long: UDP-glycosyltransferase 71K2 (481 aa).

Residues serine 285, 350-351, 368-376, and 390-393 each bind UDP-alpha-D-glucose; these read WA, HCGWNSILE, and YAEQ.

This sequence belongs to the UDP-glycosyltransferase family.

In terms of biological role, glycosyltransferase that possesses chalcone and flavonol 2'-O-glycosyltransferase activity. Converts phloretin to phlorizin (phloretin 2'-O-glucoside), a potent antioxidant. Possesses glycosyltransferase activity toward quercetin, isoliquiritigenin, butein and caffeic acid. This is UDP-glycosyltransferase 71K2 from Pyrus communis (Pear).